The sequence spans 262 residues: Sulfur carrier protein FdhD (262 aa).

Catalysis depends on C107, which acts as the Cysteine persulfide intermediate.

Belongs to the FdhD family.

The protein resides in the cytoplasm. In terms of biological role, required for formate dehydrogenase (FDH) activity. Acts as a sulfur carrier protein that transfers sulfur from IscS to the molybdenum cofactor prior to its insertion into FDH. This Bacillus subtilis (strain 168) protein is Sulfur carrier protein FdhD.